A 212-amino-acid chain; its full sequence is Penicillin-binding protein activator LpoB (212 aa).

The N-terminal stretch at 1–19 (MTKMHRYAAIAALAIFLSG) is a signal peptide. A lipid anchor (N-palmitoyl cysteine) is attached at Cys-20. Cys-20 carries the S-diacylglycerol cysteine lipid modification. A disordered region spans residues 28-73 (PVEEVKPAPEQPAQPPQPPVVPSVPTIPQQPGPIEHEDQTGQPAPK). Over residues 36-49 (PEQPAQPPQPPVVP) the composition is skewed to pro residues.

This sequence belongs to the LpoB family. In terms of assembly, interacts with PBP1b.

It is found in the cell outer membrane. Functionally, regulator of peptidoglycan synthesis that is essential for the function of penicillin-binding protein 1B (PBP1b). The sequence is that of Penicillin-binding protein activator LpoB from Salmonella typhimurium (strain LT2 / SGSC1412 / ATCC 700720).